Consider the following 326-residue polypeptide: GMP reductase (326 aa).

The active-site Thioimidate intermediate is cysteine 175. Isoleucine 204–valine 227 contributes to the NADP(+) binding site.

Belongs to the IMPDH/GMPR family. GuaC type 2 subfamily.

It catalyses the reaction IMP + NH4(+) + NADP(+) = GMP + NADPH + 2 H(+). In terms of biological role, catalyzes the irreversible NADPH-dependent deamination of GMP to IMP. It functions in the conversion of nucleobase, nucleoside and nucleotide derivatives of G to A nucleotides, and in maintaining the intracellular balance of A and G nucleotides. In Bacillus subtilis (strain 168), this protein is GMP reductase (guaC).